The following is a 610-amino-acid chain: Mitochondrial import receptor subunit TOM70 (610 aa).

Residue alanine 2 is modified to N-acetylalanine. At 2-41 (AASKPVEAAMAAAAAPASGNGVGSSGGTAAPGSGAGTLPR) the chain is on the mitochondrial intermembrane side. A helical membrane pass occupies residues 42 to 62 (WHVALAIGAPLLLGAGAMYLW). Residues 63–610 (SRRRRRREAG…KKYGLKPPTL (548 aa)) lie on the Cytoplasmic side of the membrane. The interval 69–109 (REAGGRGDASGLKRNSERKTPEGRASPALGSGPDGSGDSLE) is disordered. An Omega-N-methylarginine modification is found at arginine 74. Positions 93–108 (ASPALGSGPDGSGDSL) are enriched in low complexity. Phosphoserine occurs at positions 94, 99, 104, 107, and 112. TPR repeat units follow at residues 116–149 (AQAA…CPTE) and 155–188 (STFY…NPKY). At lysine 187 the chain carries N6-acetyllysine. Residue lysine 277 forms a Glycyl lysine isopeptide (Lys-Gly) (interchain with G-Cter in SUMO2) linkage. TPR repeat units follow at residues 296–329 (ENSG…QGKY), 331–364 (AEAL…KEAN), 369–402 (ANAL…DPMN), 403–436 (SDVY…RPKF), 444–477 (CFAL…FPRC), 478–511 (AEGY…EPDN), 513–546 (TTYV…DNKC), and 547–580 (DFAY…AKSE).

It belongs to the Tom70 family. Forms part of the preprotein translocase complex of the outer mitochondrial membrane (TOM complex) which consists of at least 7 different proteins (TOMM5, TOMM6, TOMM7, TOMM20, TOMM22, TOMM40 and TOMM70). Interacts with CAPN8. Interacts with TRADD, TRAF6 and STING. Interacts with MAVS. Interacts with HSPA8 and HSP90AA1; both interactions are required for preprotein mitochondrial import. The interaction with HSP90AA1 is direct and mediates the association of TOMM70 with IRF3 and TBK1. Upon mitochondrial depolarization, interacts with PINK1; the interaction is required for PINK1-TOM-TIM23 supercomplex formation which is critical for PINK1 stabilization at the outer mitochondrial membrane, kinase activation and downstream mitophagy.

It is found in the mitochondrion outer membrane. Acts as a receptor of the preprotein translocase complex of the outer mitochondrial membrane (TOM complex). Recognizes and mediates the translocation of mitochondrial preproteins from the cytosol into the mitochondria in a chaperone dependent manner. Mediates TBK1 and IRF3 activation induced by MAVS in response to Sendai virus infection and promotes host antiviral responses during virus infection. The protein is Mitochondrial import receptor subunit TOM70 of Rattus norvegicus (Rat).